The primary structure comprises 317 residues: Beta-ketoacyl-[acyl-carrier-protein] synthase III (317 aa).

Catalysis depends on residues Cys112 and His244. The interval 245–249 (QANLR) is ACP-binding. Asn274 is an active-site residue.

This sequence belongs to the thiolase-like superfamily. FabH family. Homodimer.

The protein resides in the cytoplasm. The catalysed reaction is malonyl-[ACP] + acetyl-CoA + H(+) = 3-oxobutanoyl-[ACP] + CO2 + CoA. It participates in lipid metabolism; fatty acid biosynthesis. Its function is as follows. Catalyzes the condensation reaction of fatty acid synthesis by the addition to an acyl acceptor of two carbons from malonyl-ACP. Catalyzes the first condensation reaction which initiates fatty acid synthesis and may therefore play a role in governing the total rate of fatty acid production. Possesses both acetoacetyl-ACP synthase and acetyl transacylase activities. Its substrate specificity determines the biosynthesis of branched-chain and/or straight-chain of fatty acids. This Blochmanniella pennsylvanica (strain BPEN) protein is Beta-ketoacyl-[acyl-carrier-protein] synthase III.